The primary structure comprises 369 residues: Maltose/maltodextrin import ATP-binding protein MalK (369 aa).

In terms of domain architecture, ABC transporter spans 4 to 234 (VQLRNVTKAW…PADRFVAGFI (231 aa)). Position 36–43 (36–43 (GPSGCGKS)) interacts with ATP.

It belongs to the ABC transporter superfamily. Maltooligosaccharide importer (TC 3.A.1.1.1) family. As to quaternary structure, the complex is composed of two ATP-binding proteins (MalK), two transmembrane proteins (MalG and MalK) and a solute-binding protein (MalE).

Its subcellular location is the cell inner membrane. It catalyses the reaction D-maltose(out) + ATP + H2O = D-maltose(in) + ADP + phosphate + H(+). Part of the ABC transporter complex MalEFGK involved in maltose/maltodextrin import. Responsible for energy coupling to the transport system. This is Maltose/maltodextrin import ATP-binding protein MalK from Salmonella typhi.